We begin with the raw amino-acid sequence, 197 residues long: Ribonuclease HII (197 aa).

Residues 9-197 (ELIAGVDEVG…APVKKALEQF (189 aa)) form the RNase H type-2 domain. The a divalent metal cation site is built by Asp-15, Glu-16, and Asp-107.

The protein belongs to the RNase HII family. Mn(2+) serves as cofactor. Requires Mg(2+) as cofactor.

The protein resides in the cytoplasm. It catalyses the reaction Endonucleolytic cleavage to 5'-phosphomonoester.. Functionally, endonuclease that specifically degrades the RNA of RNA-DNA hybrids. This chain is Ribonuclease HII, found in Haemophilus influenzae (strain PittGG).